A 422-amino-acid polypeptide reads, in one-letter code: 3-phosphoshikimate 1-carboxyvinyltransferase (422 aa).

3-phosphoshikimate-binding residues include K20, S21, and R25. K20 serves as a coordination point for phosphoenolpyruvate. Phosphoenolpyruvate contacts are provided by G91 and R119. The 3-phosphoshikimate site is built by T163, S164, Q165, D305, Q328, and K332. Residue Q165 coordinates phosphoenolpyruvate. The Proton acceptor role is filled by D305. 2 residues coordinate phosphoenolpyruvate: R336 and R377.

Belongs to the EPSP synthase family. As to quaternary structure, monomer.

The protein resides in the cytoplasm. It catalyses the reaction 3-phosphoshikimate + phosphoenolpyruvate = 5-O-(1-carboxyvinyl)-3-phosphoshikimate + phosphate. It functions in the pathway metabolic intermediate biosynthesis; chorismate biosynthesis; chorismate from D-erythrose 4-phosphate and phosphoenolpyruvate: step 6/7. Functionally, catalyzes the transfer of the enolpyruvyl moiety of phosphoenolpyruvate (PEP) to the 5-hydroxyl of shikimate-3-phosphate (S3P) to produce enolpyruvyl shikimate-3-phosphate and inorganic phosphate. This Ruminiclostridium cellulolyticum (strain ATCC 35319 / DSM 5812 / JCM 6584 / H10) (Clostridium cellulolyticum) protein is 3-phosphoshikimate 1-carboxyvinyltransferase.